A 408-amino-acid polypeptide reads, in one-letter code: S-adenosylmethionine synthase (408 aa).

His19 lines the ATP pocket. Asp21 contributes to the Mg(2+) binding site. K(+) is bound at residue Glu47. L-methionine is bound by residues Glu60 and Gln104. The flexible loop stretch occupies residues 104-114 (QSPEIASGVDH). Residues 185-187 (DAK), 255-256 (RF), Asp264, 270-271 (RK), Ala287, and Lys291 each bind ATP. Asp264 contributes to the L-methionine binding site. Residue Lys295 coordinates L-methionine.

It belongs to the AdoMet synthase family. As to quaternary structure, homotetramer; dimer of dimers. Requires Mg(2+) as cofactor. The cofactor is K(+).

It localises to the cytoplasm. The catalysed reaction is L-methionine + ATP + H2O = S-adenosyl-L-methionine + phosphate + diphosphate. It functions in the pathway amino-acid biosynthesis; S-adenosyl-L-methionine biosynthesis; S-adenosyl-L-methionine from L-methionine: step 1/1. Its function is as follows. Catalyzes the formation of S-adenosylmethionine (AdoMet) from methionine and ATP. The overall synthetic reaction is composed of two sequential steps, AdoMet formation and the subsequent tripolyphosphate hydrolysis which occurs prior to release of AdoMet from the enzyme. The sequence is that of S-adenosylmethionine synthase from Deinococcus radiodurans (strain ATCC 13939 / DSM 20539 / JCM 16871 / CCUG 27074 / LMG 4051 / NBRC 15346 / NCIMB 9279 / VKM B-1422 / R1).